A 265-amino-acid chain; its full sequence is 3-methyl-2-oxobutanoate hydroxymethyltransferase (265 aa).

Mg(2+) contacts are provided by Asp-43 and Asp-82. 3-methyl-2-oxobutanoate contacts are provided by residues 43-44, Asp-82, and Lys-111; that span reads DS. Glu-113 provides a ligand contact to Mg(2+). The Proton acceptor role is filled by Glu-180.

Belongs to the PanB family. As to quaternary structure, homodecamer; pentamer of dimers. Mg(2+) serves as cofactor.

The protein resides in the cytoplasm. It catalyses the reaction 3-methyl-2-oxobutanoate + (6R)-5,10-methylene-5,6,7,8-tetrahydrofolate + H2O = 2-dehydropantoate + (6S)-5,6,7,8-tetrahydrofolate. It functions in the pathway cofactor biosynthesis; (R)-pantothenate biosynthesis; (R)-pantoate from 3-methyl-2-oxobutanoate: step 1/2. Catalyzes the reversible reaction in which hydroxymethyl group from 5,10-methylenetetrahydrofolate is transferred onto alpha-ketoisovalerate to form ketopantoate. The polypeptide is 3-methyl-2-oxobutanoate hydroxymethyltransferase (Francisella tularensis subsp. novicida (strain U112)).